The sequence spans 305 residues: Probable xyloglucan endotransglucosylase/hydrolase protein 21 (305 aa).

Positions 1 to 25 (MVSSTLLVMSISLFLGLSILLVVHG) are cleaved as a signal peptide. The GH16 domain maps to 26–216 (KDFNQDIDIT…WSQGPFVASF (191 aa)). Asn-46 carries an N-linked (GlcNAc...) asparagine glycan. The Nucleophile role is filled by Glu-102. Glu-106 (proton donor) is an active-site residue. Glu-106 is a binding site for xyloglucan. The N-linked (GlcNAc...) asparagine glycan is linked to Asn-110. Xyloglucan contacts are provided by residues 119–121 (HTN) and 129–131 (DRE). Asn-146 carries N-linked (GlcNAc...) asparagine glycosylation. Residues 195–196 (DW) and Gly-200 each bind xyloglucan. N-linked (GlcNAc...) asparagine glycosylation is found at Asn-206 and Asn-231. 2 disulfides stabilise this stretch: Cys-225-Cys-239 and Cys-282-Cys-296. A compositionally biased stretch (low complexity) spans 236–253 (TSPCSPGDSTSSSSSSTS). Positions 236–258 (TSPCSPGDSTSSSSSSTSEWFSQ) are disordered. Arg-287 serves as a coordination point for xyloglucan.

This sequence belongs to the glycosyl hydrolase 16 family. XTH group 2 subfamily. Contains at least one intrachain disulfide bond essential for its enzymatic activity. Predominantly expressed in green siliques.

It is found in the secreted. Its subcellular location is the cell wall. It localises to the extracellular space. The protein resides in the apoplast. The catalysed reaction is breaks a beta-(1-&gt;4) bond in the backbone of a xyloglucan and transfers the xyloglucanyl segment on to O-4 of the non-reducing terminal glucose residue of an acceptor, which can be a xyloglucan or an oligosaccharide of xyloglucan.. Functionally, catalyzes xyloglucan endohydrolysis (XEH) and/or endotransglycosylation (XET). Cleaves and religates xyloglucan polymers, an essential constituent of the primary cell wall, and thereby participates in cell wall construction of growing tissues. The sequence is that of Probable xyloglucan endotransglucosylase/hydrolase protein 21 (XTH21) from Arabidopsis thaliana (Mouse-ear cress).